The chain runs to 792 residues: Probable G-protein coupled receptor 156 (792 aa).

The Extracellular segment spans residues 1 to 49; sequence MEPEINCSEFCDSFPGQELDRRPLHDLCKTTITDSQHGSADISPLSPAL. N-linked (GlcNAc...) asparagine glycosylation is present at Asn6. A helical membrane pass occupies residues 50–70; that stretch reads LGVIWTFLSCGLLLVLFFLAF. At 71–86 the chain is on the cytoplasmic side; it reads TIRCRKNRIVKMSSPN. A helical membrane pass occupies residues 87–107; sequence LNIVTLLGSCLTYSSAYLFGI. At 108–118 the chain is on the extracellular side; the sequence is QDALVGSSVEA. A helical membrane pass occupies residues 119 to 139; that stretch reads LIQTRLSLLCIGTTLVFGPIL. Residues 140–164 are Cytoplasmic-facing; sequence GKSWRLYKVFTQRVPDKRVIIKDLQ. A helical membrane pass occupies residues 165–185; sequence LLGLVAALVVADVILLVTWVL. At 186-222 the chain is on the extracellular side; sequence TDPIQCLQILGVSMKVTGRDVSCSLTNTHFCASRYSD. The helical transmembrane segment at 223-243 threads the bilayer; that stretch reads VWIALVLGCKGLLLLYGAYLA. At 244-257 the chain is on the cytoplasmic side; that stretch reads GLTNHVSSPPVNQS. Residues 258–278 form a helical membrane-spanning segment; that stretch reads LTIMVGVNLLLLTAGLLFVVT. Topologically, residues 279-287 are extracellular; the sequence is RYLHSWPNL. The chain crosses the membrane as a helical span at residues 288–308; that stretch reads VFGLTSGGIFVCTTTVNCCVF. Residues 309–792 lie on the Cytoplasmic side of the membrane; it reads LPQLRQRKAF…FKDDLKPTLV (484 aa). The stretch at 354 to 390 forms a coiled coil; that stretch reads EXSCMERLLTEKNAVIESLQEQVSNAKEKLVKLMSAE. Disordered regions lie at residues 407 to 457, 469 to 516, and 538 to 704; these read GGPA…KYDM, GCSQ…EVLP, and DLGT…QRQP. Low complexity predominate over residues 422 to 434; sequence AAAEDSLPASAAS. Basic and acidic residues-rich tracts occupy residues 443 to 457 and 474 to 486; these read SRRD…KYDM and PKAE…ERGN. A compositionally biased stretch (polar residues) spans 554–567; it reads PWKSNTSGSPQKLS. Residues 578–589 are compositionally biased toward basic residues; it reads VRRRRAAQRARS. The span at 602–619 shows a compositional bias: polar residues; sequence QANNTVSGSQNGLIVQNR. Positions 620-635 are enriched in basic and acidic residues; sequence DSPRLDHHNARSKEPR. Over residues 675-704 the composition is skewed to low complexity; the sequence is PRQPSASAPAQSSTAPCLSSXPALPRQRQP.

It belongs to the G-protein coupled receptor 3 family. GABA-B receptor subfamily. In terms of tissue distribution, widely expressed throughout the brain and is particularly dense in the olfactory tubercles, islands of Calleja, nucleus accumbens, piriform cortex and all fields of the hippocampus.

The protein localises to the cell membrane. Orphan G-protein coupled receptor involved in the regulation of hair cell orientation in mechanosensory organs of the inner ear. It is required to trigger a 180 degree reversal in hair cell orientation, creating a virtual line of polarity reversal (LPR) across which stereociliary bundles are arranged in opposite orientations. This chain is Probable G-protein coupled receptor 156 (Gpr156), found in Rattus norvegicus (Rat).